We begin with the raw amino-acid sequence, 221 residues long: Glutathione S-transferase Z1 (221 aa).

The 82-residue stretch at 7–88 folds into the GST N-terminal domain; the sequence is EKLKLYSYWR…YLDEKYPEPP (82 aa). Glutathione-binding positions include 17–18, 17–22, glutamine 46, 46–47, 59–60, valine 60, 72–73, glutamine 112, and 116–118; these read SS, SSCAHR, QF, TV, DS, and NLA. The region spanning 93 to 218 is the GST C-terminal domain; that stretch reads DLHKRAVNYQ…LPEKQPDAPS (126 aa).

The protein belongs to the GST superfamily. Zeta family. As to quaternary structure, homodimer.

Its subcellular location is the cytoplasm. It localises to the cytosol. The enzyme catalyses RX + glutathione = an S-substituted glutathione + a halide anion + H(+). Its function is as follows. Acts a maleylacetone isomerase. Also catalyzes the glutathione-dependent dehalogenation of dichloroacetic acid to glyoxylic acid. In vitro, possesses glutathione peroxidase activity toward cumene hydroperoxide and linoleic acid-13-hydroperoxide. This Arabidopsis thaliana (Mouse-ear cress) protein is Glutathione S-transferase Z1 (GSTZ1).